The following is a 331-amino-acid chain: Adenosine deaminase (331 aa).

The Zn(2+) site is built by His12 and His14. Substrate is bound by residues His14, Asp16, and Gly170. Residue His197 coordinates Zn(2+). Glu200 functions as the Proton donor in the catalytic mechanism. Asp278 contacts Zn(2+). Asp279 contributes to the substrate binding site.

This sequence belongs to the metallo-dependent hydrolases superfamily. Adenosine and AMP deaminases family. Adenosine deaminase subfamily. The cofactor is Zn(2+).

The catalysed reaction is adenosine + H2O + H(+) = inosine + NH4(+). It catalyses the reaction 2'-deoxyadenosine + H2O + H(+) = 2'-deoxyinosine + NH4(+). Functionally, catalyzes the hydrolytic deamination of adenosine and 2-deoxyadenosine. The sequence is that of Adenosine deaminase from Shewanella loihica (strain ATCC BAA-1088 / PV-4).